Reading from the N-terminus, the 298-residue chain is Acetylglutamate kinase (298 aa).

Residues 69 to 70 (GG), Arg91, and Asn191 contribute to the substrate site.

The protein belongs to the acetylglutamate kinase family. ArgB subfamily.

It localises to the cytoplasm. It carries out the reaction N-acetyl-L-glutamate + ATP = N-acetyl-L-glutamyl 5-phosphate + ADP. It participates in amino-acid biosynthesis; L-arginine biosynthesis; N(2)-acetyl-L-ornithine from L-glutamate: step 2/4. Catalyzes the ATP-dependent phosphorylation of N-acetyl-L-glutamate. The polypeptide is Acetylglutamate kinase (Neisseria gonorrhoeae (strain ATCC 700825 / FA 1090)).